We begin with the raw amino-acid sequence, 374 residues long: dTDP-3-amino-3,4,6-trideoxy-alpha-D-glucose transaminase (374 aa).

Pyridoxal 5'-phosphate is bound by residues G60, Q160, 181–186 (SFYPTK), Y214, Y221, 229–231 (NSR), and Y316. N6-(pyridoxal phosphate)lysine is present on K186.

It belongs to the degT/dnrJ/eryC1 family. The cofactor is pyridoxal 5'-phosphate.

It catalyses the reaction dTDP-3-amino-3,4,6-trideoxy-alpha-D-glucose + 2-oxoglutarate = dTDP-3-dehydro-4,6-dideoxy-alpha-D-glucose + L-glutamate. It participates in antibiotic biosynthesis. Involved in the biosynthesis of the amino sugar dTDP-L-megosamine which is found in the macrolide antibiotic and antiparasitic megalomicin A. Catalyzes the reversible transfer of the amino group from L-glutamate to the C-3 position of dTDP-3-keto-4,6-deoxyglucose to yield dTDP-3-amino-3,4,6-trideoxyglucose. The polypeptide is dTDP-3-amino-3,4,6-trideoxy-alpha-D-glucose transaminase (Micromonospora megalomicea subsp. nigra).